The primary structure comprises 280 residues: Shikimate dehydrogenase (NADP(+)) (280 aa).

Residues 15–17 (SMS) and threonine 62 contribute to the shikimate site. Catalysis depends on lysine 66, which acts as the Proton acceptor. Glutamate 78 contacts NADP(+). Positions 87 and 102 each coordinate shikimate. Residues 127–131 (GAGGA), 151–156 (NRTLEK), and isoleucine 219 each bind NADP(+). Residue tyrosine 221 coordinates shikimate. An NADP(+)-binding site is contributed by glycine 242.

This sequence belongs to the shikimate dehydrogenase family. As to quaternary structure, homodimer.

The catalysed reaction is shikimate + NADP(+) = 3-dehydroshikimate + NADPH + H(+). Its pathway is metabolic intermediate biosynthesis; chorismate biosynthesis; chorismate from D-erythrose 4-phosphate and phosphoenolpyruvate: step 4/7. Functionally, involved in the biosynthesis of the chorismate, which leads to the biosynthesis of aromatic amino acids. Catalyzes the reversible NADPH linked reduction of 3-dehydroshikimate (DHSA) to yield shikimate (SA). This is Shikimate dehydrogenase (NADP(+)) from Bacillus subtilis (strain 168).